Here is a 592-residue protein sequence, read N- to C-terminus: Arginine--tRNA ligase (592 aa).

Residues 128–138 (ANPTGPLHVGH) carry the 'HIGH' region motif.

It belongs to the class-I aminoacyl-tRNA synthetase family. As to quaternary structure, monomer.

It localises to the cytoplasm. It catalyses the reaction tRNA(Arg) + L-arginine + ATP = L-arginyl-tRNA(Arg) + AMP + diphosphate. The polypeptide is Arginine--tRNA ligase (Hydrogenovibrio crunogenus (strain DSM 25203 / XCL-2) (Thiomicrospira crunogena)).